The chain runs to 184 residues: Chaperone protein dnaJ 72 (184 aa).

Positions Asp-3 to Ser-73 constitute a J domain. The helical transmembrane segment at Phe-133–Ile-150 threads the bilayer.

Belongs to the DnaJ family. C/III subfamily.

The protein resides in the membrane. Functionally, plays a continuous role in plant development probably in the structural organization of compartments. This chain is Chaperone protein dnaJ 72 (ATJ72), found in Arabidopsis thaliana (Mouse-ear cress).